Here is a 332-residue protein sequence, read N- to C-terminus: Arabinogalactan endo-beta-1,4-galactanase (332 aa).

Residue Asn-111 is glycosylated (N-linked (GlcNAc...) asparagine). The Proton donor role is filled by Glu-135. Residue Glu-245 is the Nucleophile of the active site.

This sequence belongs to the glycosyl hydrolase 53 family.

The enzyme catalyses The enzyme specifically hydrolyzes (1-&gt;4)-beta-D-galactosidic linkages in type I arabinogalactans.. The chain is Arabinogalactan endo-beta-1,4-galactanase from Thermothelomyces thermophilus (Myceliophthora thermophila).